Here is a 396-residue protein sequence, read N- to C-terminus: Putative 2-hydroxyacid dehydrogenase YPL113C (396 aa).

Residues 227 to 228, 311 to 313, and Asp-337 contribute to the NAD(+) site; these read SI and VGR. Residue Arg-313 is part of the active site. Residue Glu-342 is part of the active site. His-361 functions as the Proton donor in the catalytic mechanism. 361-364 provides a ligand contact to NAD(+); the sequence is HIGS.

This sequence belongs to the D-isomer specific 2-hydroxyacid dehydrogenase family.

Functionally, putative 2-hydroxyacid dehydrogenase. This is Putative 2-hydroxyacid dehydrogenase YPL113C from Saccharomyces cerevisiae (strain ATCC 204508 / S288c) (Baker's yeast).